A 381-amino-acid chain; its full sequence is Diguanylate cyclase DosC (381 aa).

H98 lines the heme pocket. The region spanning 325–381 (TPLSVLIIDVDKFKEINDTWGHNTGDEILRKVSFLSQKRLVKSKILGAGSSRKLAVS) is the GGDEF domain. Residue D333 participates in Mg(2+) binding. The substrate site is built by N341 and D350.

The cofactor is heme. Requires Mg(2+) as cofactor.

The enzyme catalyses 2 GTP = 3',3'-c-di-GMP + 2 diphosphate. Its pathway is purine metabolism; 3',5'-cyclic di-GMP biosynthesis. Globin-coupled heme-based oxygen sensor protein displaying diguanylate cyclase (DGC) activity in response to oxygen availability. Thus, catalyzes the synthesis of cyclic diguanylate (c-di-GMP) via the condensation of 2 GTP molecules. Cyclic-di-GMP is a second messenger which controls cell surface-associated traits in bacteria. In Shigella flexneri, this protein is Diguanylate cyclase DosC (dosC).